The following is a 216-amino-acid chain: Histone doublet H4-H3 (216 aa).

Basic residues predominate over residues 1–12; that stretch reads MSKAGKKVKAQQ. The interval 1 to 23 is disordered; the sequence is MSKAGKKVKAQQHGHLADHVSVG.

It localises to the host nucleus. The protein resides in the host cytoplasm. It is found in the virion. Functionally, histone-like protein that is recruited to viral factories during viral replication and participates in viral DNA packaging and virion production probably by forming unstable nucleosome-like particles. May compact the viral DNA. This chain is Histone doublet H4-H3, found in Melbournevirus (MelV).